The sequence spans 589 residues: Oligo-1,6-glucosidase IMA2 (589 aa).

The Nucleophile role is filled by Asp-215. Glu-277 (proton donor) is an active-site residue.

The protein belongs to the glycosyl hydrolase 13 family.

The enzyme catalyses Hydrolysis of (1-&gt;6)-alpha-D-glucosidic linkages in some oligosaccharides produced from starch and glycogen by alpha-amylase, and in isomaltose.. Alpha-glucosidase with specificity for isomaltase, methyl-alpha-glucoside, and palatinose. This is Oligo-1,6-glucosidase IMA2 (IMA2) from Saccharomyces cerevisiae (strain ATCC 204508 / S288c) (Baker's yeast).